We begin with the raw amino-acid sequence, 138 residues long: ATP synthase subunit g, mitochondrial (138 aa).

Belongs to the ATPase g subunit family. F-type ATP synthases have 2 components, the catalytic core F(1) and the membrane-embedded component F(0), linked together by a central stalk and a peripheral stalk. The central stalk, also called rotor shaft, is often seen as part of F(1). The peripheral stalk is seen as part of F(0). F(0) contains the membrane channel next to the rotor. F-type ATP synthases form dimers but each monomer functions independently in ATP generation. The dimer consists of 17 different polypeptides: ATP1 (subunit alpha, 3 molecules per monomer, part of F(1)), ATP2 (subunit beta, 3 copies per monomer, part of F(1)), ATP3 (subunit gamma, part of the central stalk), ATP4 (subunit b, part of the peripheral stalk), ATP5/OSCP (subunit 5/OSCP, part of the peripheral stalk), ATP6 (subunit a, part of the peripheral stalk), ATP7 (subunit d, part of the peripheral stalk), ATP8 (subunit 8, part of the peripheral stalk), OLI1 (subunit c, part of the rotor, 10 molecules per monomer), ATP14 (subunit h, part of the peripheral stalk), ATP15 (subunit epsilon, part of the central stalk), ATP16 (subunit delta, part of the central stalk), ATP17 (subunit f, part of the peripheral stalk), ATP18 (subunit i/j, part of the peripheral stalk), ATP19 (subunit k, dimer-specific, at interface between monomers), ATP20 (subunit g, at interface between monomers), TIM11 (subunit e, at interface between monomers).

Its subcellular location is the mitochondrion inner membrane. In terms of biological role, mitochondrial membrane ATP synthase (F(1)F(0) ATP synthase or Complex V) produces ATP from ADP in the presence of a proton gradient across the membrane which is generated by electron transport complexes of the respiratory chain. F-type ATP synthases consist of two structural domains, F(1) - containing the extramembraneous catalytic core, and F(0) - containing the membrane proton channel, linked together by a central stalk and a peripheral stalk. During catalysis, ATP synthesis in the catalytic domain of F(1) is coupled via a rotary mechanism of the central stalk subunits to proton translocation. Part of the complex F(0) domain. Minor subunit located with subunit a/ATP6 in the membrane. Together with subunit e/TIM11, probably contributes to membrane curvature at the site of the ATP synthase dimer, ultimately contributing to formation of cristae. The chain is ATP synthase subunit g, mitochondrial from Yarrowia lipolytica (strain CLIB 122 / E 150) (Yeast).